A 355-amino-acid polypeptide reads, in one-letter code: Probable tRNA-dihydrouridine synthase 1 (355 aa).

FMN-binding positions include 48–50 and Q102; that span reads PLS. The Proton donor role is filled by C132. Residues K171, 232–234, and 256–257 contribute to the FMN site; these read NGD and SR.

This sequence belongs to the Dus family. The cofactor is FMN.

It catalyses the reaction a 5,6-dihydrouridine in tRNA + NAD(+) = a uridine in tRNA + NADH + H(+). The enzyme catalyses a 5,6-dihydrouridine in tRNA + NADP(+) = a uridine in tRNA + NADPH + H(+). Functionally, catalyzes the synthesis of 5,6-dihydrouridine (D), a modified base found in the D-loop of most tRNAs, via the reduction of the C5-C6 double bond in target uridines. This is Probable tRNA-dihydrouridine synthase 1 (dus1) from Synechocystis sp. (strain ATCC 27184 / PCC 6803 / Kazusa).